The sequence spans 66 residues: Large ribosomal subunit protein uL29 (66 aa).

Belongs to the universal ribosomal protein uL29 family.

This is Large ribosomal subunit protein uL29 from Borreliella afzelii (strain PKo) (Borrelia afzelii).